The chain runs to 345 residues: Biotin synthase (345 aa).

One can recognise a Radical SAM core domain in the interval Arg38–Ala256. [4Fe-4S] cluster is bound by residues Cys53, Cys57, and Cys60. Positions 97, 128, 188, and 260 each coordinate [2Fe-2S] cluster.

It belongs to the radical SAM superfamily. Biotin synthase family. In terms of assembly, homodimer. [4Fe-4S] cluster is required as a cofactor. [2Fe-2S] cluster serves as cofactor.

The catalysed reaction is (4R,5S)-dethiobiotin + (sulfur carrier)-SH + 2 reduced [2Fe-2S]-[ferredoxin] + 2 S-adenosyl-L-methionine = (sulfur carrier)-H + biotin + 2 5'-deoxyadenosine + 2 L-methionine + 2 oxidized [2Fe-2S]-[ferredoxin]. The protein operates within cofactor biosynthesis; biotin biosynthesis; biotin from 7,8-diaminononanoate: step 2/2. Its function is as follows. Catalyzes the conversion of dethiobiotin (DTB) to biotin by the insertion of a sulfur atom into dethiobiotin via a radical-based mechanism. The protein is Biotin synthase of Pectobacterium atrosepticum (strain SCRI 1043 / ATCC BAA-672) (Erwinia carotovora subsp. atroseptica).